A 663-amino-acid chain; its full sequence is Transketolase 2 (663 aa).

Residue histidine 25 participates in substrate binding. Thiamine diphosphate contacts are provided by residues histidine 65 and 113–115 (GPL). Residue aspartate 154 participates in Mg(2+) binding. Thiamine diphosphate-binding residues include glycine 155 and asparagine 184. Mg(2+)-binding residues include asparagine 184 and isoleucine 186. Substrate-binding residues include histidine 259, arginine 356, and serine 383. Histidine 259 is a thiamine diphosphate binding site. The active-site Proton donor is glutamate 410. Phenylalanine 436 serves as a coordination point for thiamine diphosphate. The substrate site is built by histidine 460, aspartate 468, and arginine 519.

The protein belongs to the transketolase family. As to quaternary structure, homodimer. The cofactor is Mg(2+). It depends on Ca(2+) as a cofactor. Mn(2+) is required as a cofactor. Co(2+) serves as cofactor. Requires thiamine diphosphate as cofactor.

It carries out the reaction D-sedoheptulose 7-phosphate + D-glyceraldehyde 3-phosphate = aldehydo-D-ribose 5-phosphate + D-xylulose 5-phosphate. Its function is as follows. Catalyzes the transfer of a two-carbon ketol group from a ketose donor to an aldose acceptor, via a covalent intermediate with the cofactor thiamine pyrophosphate. The sequence is that of Transketolase 2 (tkt2) from Aliivibrio fischeri (strain ATCC 700601 / ES114) (Vibrio fischeri).